The sequence spans 415 residues: Phosphoglycerate kinase (415 aa).

Substrate contacts are provided by residues 24–26, Arg-39, 62–65, Arg-121, and Arg-161; these read DLN and HLGR. ATP-binding positions include Lys-211, Gly-307, Glu-338, and 367-370; that span reads GGDS.

It belongs to the phosphoglycerate kinase family. As to quaternary structure, monomer.

The protein resides in the cytoplasm. It catalyses the reaction (2R)-3-phosphoglycerate + ATP = (2R)-3-phospho-glyceroyl phosphate + ADP. It functions in the pathway carbohydrate degradation; glycolysis; pyruvate from D-glyceraldehyde 3-phosphate: step 2/5. The protein is Phosphoglycerate kinase of Micrococcus luteus (strain ATCC 4698 / DSM 20030 / JCM 1464 / CCM 169 / CCUG 5858 / IAM 1056 / NBRC 3333 / NCIMB 9278 / NCTC 2665 / VKM Ac-2230) (Micrococcus lysodeikticus).